A 203-amino-acid polypeptide reads, in one-letter code: ATP-dependent Clp protease proteolytic subunit (203 aa).

Residue serine 103 is the Nucleophile of the active site. Residue histidine 128 is part of the active site.

Belongs to the peptidase S14 family. In terms of assembly, fourteen ClpP subunits assemble into 2 heptameric rings which stack back to back to give a disk-like structure with a central cavity, resembling the structure of eukaryotic proteasomes.

It is found in the cytoplasm. It carries out the reaction Hydrolysis of proteins to small peptides in the presence of ATP and magnesium. alpha-casein is the usual test substrate. In the absence of ATP, only oligopeptides shorter than five residues are hydrolyzed (such as succinyl-Leu-Tyr-|-NHMec, and Leu-Tyr-Leu-|-Tyr-Trp, in which cleavage of the -Tyr-|-Leu- and -Tyr-|-Trp bonds also occurs).. In terms of biological role, cleaves peptides in various proteins in a process that requires ATP hydrolysis. Has a chymotrypsin-like activity. Plays a major role in the degradation of misfolded proteins. This Dichelobacter nodosus (strain VCS1703A) protein is ATP-dependent Clp protease proteolytic subunit.